Reading from the N-terminus, the 646-residue chain is Interferon-induced GTP-binding protein MxA (646 aa).

In terms of domain architecture, Dynamin-type G spans D34 to P307. Residues G44–S51 form a G1 motif region. G44–S51 serves as a coordination point for GTP. A G2 motif region spans residues V69–R71. Positions D145 to G148 are G3 motif. GTP is bound by residues D145 to I149 and T214 to D217. A G4 motif region spans residues T214 to D217. A G5 motif region spans residues R246 to G249. A GED domain is found at L546–F637.

Belongs to the TRAFAC class dynamin-like GTPase superfamily. Dynamin/Fzo/YdjA family.

The protein localises to the cytoplasm. This chain is Interferon-induced GTP-binding protein MxA (mxa), found in Danio rerio (Zebrafish).